The sequence spans 349 residues: S-adenosylmethionine:tRNA ribosyltransferase-isomerase (349 aa).

This sequence belongs to the QueA family. In terms of assembly, monomer.

The protein resides in the cytoplasm. It catalyses the reaction 7-aminomethyl-7-carbaguanosine(34) in tRNA + S-adenosyl-L-methionine = epoxyqueuosine(34) in tRNA + adenine + L-methionine + 2 H(+). It participates in tRNA modification; tRNA-queuosine biosynthesis. Transfers and isomerizes the ribose moiety from AdoMet to the 7-aminomethyl group of 7-deazaguanine (preQ1-tRNA) to give epoxyqueuosine (oQ-tRNA). The polypeptide is S-adenosylmethionine:tRNA ribosyltransferase-isomerase (Parabacteroides distasonis (strain ATCC 8503 / DSM 20701 / CIP 104284 / JCM 5825 / NCTC 11152)).